A 262-amino-acid polypeptide reads, in one-letter code: Nurim (262 aa).

The Nuclear segment spans residues 1 to 4 (MAPA). The helical transmembrane segment at 5–28 (LLLVPAALASFVLAFGTGVEFVRF) threads the bilayer. The Perinuclear space portion of the chain corresponds to 29–58 (TSLRPLLGGIPESGGPDARHGWLAALQDRS). Residues 59 to 80 (ILASLAWDLCLLLLFVVQHSLM) form a helical membrane-spanning segment. Topologically, residues 81 to 97 (ATEAVKAWTSRYFGVLQ) are nuclear. A helical transmembrane segment spans residues 98-114 (RSLYVACTALALQLVMR). Topologically, residues 115–133 (YWEATPRGPVLWEARAEPW) are perinuclear space. The helical transmembrane segment at 134–164 (ATWVPLLCFVLHVVSWLLIFSILLVFDYAEL) threads the bilayer. Over 165 to 191 (MGLKQVYYHVLGLGEPLSLKSPRALRL) the chain is Nuclear. A helical transmembrane segment spans residues 192-210 (FSHLRHPVCVELLTVLWVV). The Perinuclear space segment spans residues 211–216 (PTLGTD). Residues 217–234 (RLLLALLFTLYLGLAHGL) form a helical membrane-spanning segment. At 235–262 (DQQDLRYLRSQLQRKLQLLSRPQDGEAE) the chain is on the nuclear side.

This sequence belongs to the nurim family.

It localises to the nucleus inner membrane. The polypeptide is Nurim (Nrm) (Rattus norvegicus (Rat)).